The chain runs to 1175 residues: MDKLPPSMRKRLYSLPQQVGAKAWIMDEEEDAEEEGAGGRQDPRRRSIRLRPLPSPSPSPSAAAAAAGGAESRGAALGGAADGEGPARGAAKSSTNGDCRRFRGSLASLGSRGGGGGGGSTGGGSHGHLHDSAEERRLIAEGDASPGEDRTPPGLAAEPERPGAPAPPAASPPQVPSSCGEQRPADAAVKVEGGAAAGDQILPEAEARLGQAGFMQRQFGAMLQPGVNKFSLRMFGSQKAVEREQERVKSAGFWIIHPYSDFRFYWDLTMLLLMVGNLIIIPVGITFFKDENTTPWIVFNVVSDTFFLIDLVLNFRTGIVVEDNTDIILDPRRIKMKYLKSWFVVDFVSSIPVDYIFLIVETRIDSEVYKTARALRIVRFTKILSLLRLLRLSRLIRYIHQWEEIFHMTYDLASAVVRIVNLIGMMLLLCHWDGCLQFLVPMLQDFPDDCWVSLNNMVNNSWGKQYSYALFKAMSHMLCIGYGRQAPMGMSDVWLTMLSMIVGATCYAMFIGHATALIQSLDSSRRQYQEKYKQVEQYMSFHKLPPDTRQRIHDYYEHRYQGKMFDEESILGELSEPLREEIINFNCRKLVASMPLFANADPNFVTSMLTKLRFEVFQPGDYIIREGTIGKKMYFIQHGVVSVLTKGNKETKLADGSYFGEICLLTRGRRTASVRADTYCRLYSLSVDNFNEVLEEYPMMRRAFETVALDRLDRIGKKNSILLHKVQHDLSSGVSNYQENAIVQRIVQHDREMAHCARRAQATTPVAPAIWTPLIQAPLQAAAATTSVAIALTHHPRLPAAIFRPPPGPTTLGSLGAGQTPRHLRRLQSLAPSAPSPASPASSPSQPDTPSSASLHVQPLPGCSTPAGLGSLLPTAGSPPAPTPPTTAGAAGFSHFHRALGGSLSSSDSPLLTPMQSAARSPQQPPPPPGAPAGLGLLEHFLPPPARSPTSSPGQLGQPPGELSPGLGSGPPGTPETPPRQPERLPFAAGASAGASPVAFSPRGGPSPPGHSPGTPRTFPSAPPRASGSHGSLLLPPASSPPPPPPPPAPQRRATPPLAPGRLSQDLKLISASQPALPQDGAQTLRRASPHSSSGESVAALPPFPRAPGRPPGAGPGQHVTLTLPRKASSGSLPPPLSLFGPRAAPAGGPRLTAAPQREPGAKSEPVRSKLPSNL.

The Cytoplasmic segment spans residues 1 to 259 (MDKLPPSMRK…SAGFWIIHPY (259 aa)). The tract at residues 17 to 186 (QQVGAKAWIM…SSCGEQRPAD (170 aa)) is disordered. Residues 26 to 36 (MDEEEDAEEEG) show a composition bias toward acidic residues. Over residues 60–75 (PSAAAAAAGGAESRGA) the composition is skewed to low complexity. Gly residues predominate over residues 111–126 (SRGGGGGGGSTGGGSH). Basic and acidic residues predominate over residues 128-140 (HLHDSAEERRLIA). Position 145 is a phosphoserine (serine 145). The segment covering 162 to 175 (PGAPAPPAASPPQV) has biased composition (pro residues). Residues 260 to 288 (SDFRFYWDLTMLLLMVGNLIIIPVGITFF) form a helical membrane-spanning segment. Residues 289–292 (KDEN) are Extracellular-facing. A helical transmembrane segment spans residues 293–316 (TTPWIVFNVVSDTFFLIDLVLNFR). Topologically, residues 317 to 329 (TGIVVEDNTDIIL) are cytoplasmic. A helical membrane pass occupies residues 330–352 (DPRRIKMKYLKSWFVVDFVSSIP). At 353–374 (VDYIFLIVETRIDSEVYKTARA) the chain is on the extracellular side. A helical; Voltage-sensor membrane pass occupies residues 375–410 (LRIVRFTKILSLLRLLRLSRLIRYIHQWEEIFHMTY). Topologically, residues 411 to 413 (DLA) are cytoplasmic. Residues 414-444 (SAVVRIVNLIGMMLLLCHWDGCLQFLVPMLQ) form a helical membrane-spanning segment. The Extracellular portion of the chain corresponds to 445-449 (DFPDD). Positions 450–478 (CWVSLNNMVNNSWGKQYSYALFKAMSHML) form an intramembrane region, pore-forming. Residues 479–488 (CIGYGRQAPM) lie on the Extracellular side of the membrane. A helical membrane pass occupies residues 489 to 521 (GMSDVWLTMLSMIVGATCYAMFIGHATALIQSL). Residues 522–1175 (DSSRRQYQEK…PVRSKLPSNL (654 aa)) are Cytoplasmic-facing. The 3',5'-cyclic GMP site is built by tyrosine 560, lysine 563, phenylalanine 565, and glutamate 567. 3',5'-cyclic AMP-binding residues include glycine 660, glutamate 661, cysteine 663, arginine 670, threonine 671, valine 674, and arginine 711. Disordered stretches follow at residues 801 to 820 (AIFR…AGQT) and 830 to 1175 (LAPS…PSNL). 4 stretches are compositionally biased toward low complexity: residues 839–854 (SPAS…SSAS), 900–912 (LGGS…SPLL), 948–966 (SPTS…LSPG), and 984–1004 (RLPF…SPRG). Residues 1038-1050 (ASSPPPPPPPPAP) are compositionally biased toward pro residues. Phosphoserine is present on residues serine 1089 and serine 1093. The span at 1102 to 1114 (PPFPRAPGRPPGA) shows a compositional bias: pro residues.

This sequence belongs to the potassium channel HCN family. As to quaternary structure, homotetramer. The channel is composed of a homo- or heterotetrameric complex of pore-forming subunits. Interacts with PEX5L with a 4:4 HCN4:PEX5L stoichiometry; reduces the effects of cAMP on the voltage-dependence and rate of activation. Interacts with IRAG1; regulates HCN4 channel activity. Interacts with IRAG2; regulates HCN4 channel activity. S-palmitoylated. As to expression, highly expressed in the heart sinoatrial node (SAN). Not detected in atrium, ventricle, forebrain or cerebellum. Detected at very low levels in total brain.

Its subcellular location is the cell membrane. It catalyses the reaction K(+)(in) = K(+)(out). The enzyme catalyses Na(+)(in) = Na(+)(out). Activated by cAMP and to a lesser extent by cGMP and cCMP. cAMP binding causes a conformation change that leads to the assembly of an active tetramer and channel opening by shifting the voltage-dependency towards more positive voltages. Binding of cAMP removes a tonic inhibition conferred by cyclic nucleotide-binding domain (CNBD) on channel opening. Cyclic dinucleotides can modulate HCN4 channel; cyclic dinucleotides acting as potent antagonists of cAMP. Inhibited by extracellular Cs(+) ions. Auxiliary subunits can also regulate HCN4 channel. IRAG1 causes a gain-of-function by shifting HCN4 activation to more depolarized membrane potentials in the absence of cAMP. In contrast, IRAG2 causes a loss-of-function by inhibiting cAMP-dependent potentiation of HCN4 activation. In terms of biological role, hyperpolarization-activated ion channel that are permeable to Na(+) and K(+) ions with very slow activation and inactivation. Exhibits higher selectivity for K(+) over Na(+) ions. Contributes to the native pacemaker currents in heart (If) that regulate the rhythm of heart beat. Contributes to the native pacemaker currents in neurons (Ih). May mediate responses to sour stimuli. This is Potassium/sodium hyperpolarization-activated cyclic nucleotide-gated channel 4 (HCN4) from Oryctolagus cuniculus (Rabbit).